Reading from the N-terminus, the 326-residue chain is DNA-directed RNA polymerase subunit alpha (326 aa).

Residues 1–232 (MQGSARDFLK…EQLSSFVELE (232 aa)) form an alpha N-terminal domain (alpha-NTD) region. An alpha C-terminal domain (alpha-CTD) region spans residues 246–326 (FDPQLLAAVD…NWPPVDLMSE (81 aa)).

It belongs to the RNA polymerase alpha chain family. Homodimer. The RNAP catalytic core consists of 2 alpha, 1 beta, 1 beta' and 1 omega subunit. When a sigma factor is associated with the core the holoenzyme is formed, which can initiate transcription.

It carries out the reaction RNA(n) + a ribonucleoside 5'-triphosphate = RNA(n+1) + diphosphate. Its function is as follows. DNA-dependent RNA polymerase catalyzes the transcription of DNA into RNA using the four ribonucleoside triphosphates as substrates. The chain is DNA-directed RNA polymerase subunit alpha from Vesicomyosocius okutanii subsp. Calyptogena okutanii (strain HA).